The sequence spans 486 residues: Lipase 1 (486 aa).

Cysteines 58 and 82 form a disulfide. The active-site Acyl-ester intermediate is serine 193. The Charge relay system role is filled by aspartate 303. Asparagine 332 carries N-linked (GlcNAc...) asparagine glycosylation. Histidine 392 acts as the Charge relay system in catalysis.

Belongs to the type-B carboxylesterase/lipase family.

The enzyme catalyses a triacylglycerol + H2O = a diacylglycerol + a fatty acid + H(+). This is Lipase 1 (LIP1) from Yarrowia lipolytica (strain CLIB 122 / E 150) (Yeast).